Reading from the N-terminus, the 235-residue chain is uncharacterized protein (235 aa).

2 disordered regions span residues 1-47 (MSHK…QSTN) and 78-128 (QEHH…KQPQ). Positions 20 to 33 (HPPGQSLSSISWSP) are enriched in polar residues. The segment covering 84–98 (QQQQQQRQNIRSQNS) has biased composition (low complexity). Polar residues predominate over residues 106 to 128 (VQESQWTSSASNSSLKKQEKQPQ).

This is an uncharacterized protein from Saccharomyces cerevisiae (strain ATCC 204508 / S288c) (Baker's yeast).